The primary structure comprises 153 residues: MIKVKIVRVNKKAHLPVYATAHAAGMDVAACLDEPVMLEPFSTALIPSGFAIELPEGYEAQLRPRSGLALKHLISLPNSPATIDADYRGEVRVILVNFGKEPFSVAHGDRIAQMVVSRVERVDFDEAEELSMTQRGEGGFGHTGISAVHPRTH.

Substrate-binding positions include 65–67 (RSG), Asn-78, and 82–84 (TID). Positions 132–153 (MTQRGEGGFGHTGISAVHPRTH) are disordered.

It belongs to the dUTPase family. The cofactor is Mg(2+).

The catalysed reaction is dUTP + H2O = dUMP + diphosphate + H(+). The protein operates within pyrimidine metabolism; dUMP biosynthesis; dUMP from dCTP (dUTP route): step 2/2. Functionally, this enzyme is involved in nucleotide metabolism: it produces dUMP, the immediate precursor of thymidine nucleotides and it decreases the intracellular concentration of dUTP so that uracil cannot be incorporated into DNA. This is Deoxyuridine 5'-triphosphate nucleotidohydrolase from Chlorobium limicola (strain DSM 245 / NBRC 103803 / 6330).